The sequence spans 314 residues: tRNA uridine(34) hydroxylase (314 aa).

In terms of domain architecture, Rhodanese spans 140–234 (ARDDVILIDT…YLEETPPDES (95 aa)). The active-site Cysteine persulfide intermediate is C194.

This sequence belongs to the TrhO family.

It carries out the reaction uridine(34) in tRNA + AH2 + O2 = 5-hydroxyuridine(34) in tRNA + A + H2O. In terms of biological role, catalyzes oxygen-dependent 5-hydroxyuridine (ho5U) modification at position 34 in tRNAs. In Acinetobacter baumannii (strain AYE), this protein is tRNA uridine(34) hydroxylase.